The primary structure comprises 88 residues: Putative membrane protein insertion efficiency factor (88 aa).

The disordered stretch occupies residues 66–88 (DFVPPKKDKNADSEHSCKAHHHH). Basic and acidic residues predominate over residues 69 to 82 (PPKKDKNADSEHSC).

Belongs to the UPF0161 family.

The protein localises to the cell membrane. Functionally, could be involved in insertion of integral membrane proteins into the membrane. The protein is Putative membrane protein insertion efficiency factor of Listeria monocytogenes serotype 4a (strain HCC23).